The chain runs to 570 residues: Proline--tRNA ligase (570 aa).

Belongs to the class-II aminoacyl-tRNA synthetase family. ProS type 1 subfamily. In terms of assembly, homodimer.

The protein localises to the cytoplasm. The catalysed reaction is tRNA(Pro) + L-proline + ATP = L-prolyl-tRNA(Pro) + AMP + diphosphate. In terms of biological role, catalyzes the attachment of proline to tRNA(Pro) in a two-step reaction: proline is first activated by ATP to form Pro-AMP and then transferred to the acceptor end of tRNA(Pro). As ProRS can inadvertently accommodate and process non-cognate amino acids such as alanine and cysteine, to avoid such errors it has two additional distinct editing activities against alanine. One activity is designated as 'pretransfer' editing and involves the tRNA(Pro)-independent hydrolysis of activated Ala-AMP. The other activity is designated 'posttransfer' editing and involves deacylation of mischarged Ala-tRNA(Pro). The misacylated Cys-tRNA(Pro) is not edited by ProRS. This chain is Proline--tRNA ligase, found in Syntrophomonas wolfei subsp. wolfei (strain DSM 2245B / Goettingen).